We begin with the raw amino-acid sequence, 110 residues long: Cation efflux system protein CusF (110 aa).

A signal peptide spans 1 to 21 (MKKALQVAMFSLFTVIGFNAQ).

The cus efflux system is composed of CusA, CusB, CusC and CusF. Interacts with copper-exporting P-type ATPase CopA; when this protein is precharged with copper it binds very little CopA.

The protein localises to the periplasm. Part of a cation efflux system that mediates resistance to copper and silver. Binds one copper per polypeptide. This is Cation efflux system protein CusF (cusF) from Escherichia coli (strain K12).